The sequence spans 626 residues: Glutamate--cysteine ligase (626 aa).

This sequence belongs to the glutamate--cysteine ligase type 3 family. In terms of assembly, monomer.

It catalyses the reaction L-cysteine + L-glutamate + ATP = gamma-L-glutamyl-L-cysteine + ADP + phosphate + H(+). The protein operates within sulfur metabolism; glutathione biosynthesis; glutathione from L-cysteine and L-glutamate: step 1/2. An essential enzyme in glutathione (L-gamma-glutamyl-L-cysteinylglycine, GSH) biosynthesis, GSH is essential for growth and differentiation to prespore stage. Catalyzes the condensation of glutamate to cysteine. The chain is Glutamate--cysteine ligase (gcsA) from Dictyostelium discoideum (Social amoeba).